The following is a 109-amino-acid chain: Flagellar hook-basal body complex protein FliE (109 aa).

Belongs to the FliE family.

Its subcellular location is the bacterial flagellum basal body. The polypeptide is Flagellar hook-basal body complex protein FliE (Pseudomonas savastanoi pv. phaseolicola (strain 1448A / Race 6) (Pseudomonas syringae pv. phaseolicola (strain 1448A / Race 6))).